Reading from the N-terminus, the 466-residue chain is Methylenetetrahydrofolate--tRNA-(uracil-5-)-methyltransferase TrmFO (466 aa).

14–19 (GGGLAG) is an FAD binding site.

It belongs to the MnmG family. TrmFO subfamily. The cofactor is FAD.

It localises to the cytoplasm. The enzyme catalyses uridine(54) in tRNA + (6R)-5,10-methylene-5,6,7,8-tetrahydrofolate + NADH + H(+) = 5-methyluridine(54) in tRNA + (6S)-5,6,7,8-tetrahydrofolate + NAD(+). The catalysed reaction is uridine(54) in tRNA + (6R)-5,10-methylene-5,6,7,8-tetrahydrofolate + NADPH + H(+) = 5-methyluridine(54) in tRNA + (6S)-5,6,7,8-tetrahydrofolate + NADP(+). Its function is as follows. Catalyzes the folate-dependent formation of 5-methyl-uridine at position 54 (M-5-U54) in all tRNAs. In Brucella canis (strain ATCC 23365 / NCTC 10854 / RM-666), this protein is Methylenetetrahydrofolate--tRNA-(uracil-5-)-methyltransferase TrmFO.